Consider the following 459-residue polypeptide: Exodeoxyribonuclease 7 large subunit (459 aa).

The protein belongs to the XseA family. In terms of assembly, heterooligomer composed of large and small subunits.

It localises to the cytoplasm. It catalyses the reaction Exonucleolytic cleavage in either 5'- to 3'- or 3'- to 5'-direction to yield nucleoside 5'-phosphates.. Its function is as follows. Bidirectionally degrades single-stranded DNA into large acid-insoluble oligonucleotides, which are then degraded further into small acid-soluble oligonucleotides. The protein is Exodeoxyribonuclease 7 large subunit of Pseudomonas aeruginosa (strain LESB58).